We begin with the raw amino-acid sequence, 347 residues long: Probable dual-specificity RNA methyltransferase RlmN (347 aa).

The active-site Proton acceptor is the Glu-94. Positions 100-334 (TETRTTACVS…AKVRHSRGKD (235 aa)) constitute a Radical SAM core domain. The cysteines at positions 107 and 339 are disulfide-linked. [4Fe-4S] cluster-binding residues include Cys-114, Cys-118, and Cys-121. Residues 165–166 (GE), Ser-197, 220–222 (SLH), and Asn-296 each bind S-adenosyl-L-methionine. The S-methylcysteine intermediate role is filled by Cys-339.

Belongs to the radical SAM superfamily. RlmN family. [4Fe-4S] cluster is required as a cofactor.

It is found in the cytoplasm. It carries out the reaction adenosine(2503) in 23S rRNA + 2 reduced [2Fe-2S]-[ferredoxin] + 2 S-adenosyl-L-methionine = 2-methyladenosine(2503) in 23S rRNA + 5'-deoxyadenosine + L-methionine + 2 oxidized [2Fe-2S]-[ferredoxin] + S-adenosyl-L-homocysteine. The enzyme catalyses adenosine(37) in tRNA + 2 reduced [2Fe-2S]-[ferredoxin] + 2 S-adenosyl-L-methionine = 2-methyladenosine(37) in tRNA + 5'-deoxyadenosine + L-methionine + 2 oxidized [2Fe-2S]-[ferredoxin] + S-adenosyl-L-homocysteine. In terms of biological role, specifically methylates position 2 of adenine 2503 in 23S rRNA and position 2 of adenine 37 in tRNAs. The polypeptide is Probable dual-specificity RNA methyltransferase RlmN (Flavobacterium psychrophilum (strain ATCC 49511 / DSM 21280 / CIP 103535 / JIP02/86)).